The sequence spans 473 residues: Argininosuccinate lyase (473 aa).

The protein belongs to the lyase 1 family. Argininosuccinate lyase subfamily.

Its subcellular location is the cytoplasm. The enzyme catalyses 2-(N(omega)-L-arginino)succinate = fumarate + L-arginine. It participates in amino-acid biosynthesis; L-arginine biosynthesis; L-arginine from L-ornithine and carbamoyl phosphate: step 3/3. This Mycobacteroides abscessus (strain ATCC 19977 / DSM 44196 / CCUG 20993 / CIP 104536 / JCM 13569 / NCTC 13031 / TMC 1543 / L948) (Mycobacterium abscessus) protein is Argininosuccinate lyase.